The primary structure comprises 503 residues: Aspartyl/glutamyl-tRNA(Asn/Gln) amidotransferase subunit B (503 aa).

The protein belongs to the GatB/GatE family. GatB subfamily. In terms of assembly, heterotrimer of A, B and C subunits.

The enzyme catalyses L-glutamyl-tRNA(Gln) + L-glutamine + ATP + H2O = L-glutaminyl-tRNA(Gln) + L-glutamate + ADP + phosphate + H(+). The catalysed reaction is L-aspartyl-tRNA(Asn) + L-glutamine + ATP + H2O = L-asparaginyl-tRNA(Asn) + L-glutamate + ADP + phosphate + 2 H(+). Its function is as follows. Allows the formation of correctly charged Asn-tRNA(Asn) or Gln-tRNA(Gln) through the transamidation of misacylated Asp-tRNA(Asn) or Glu-tRNA(Gln) in organisms which lack either or both of asparaginyl-tRNA or glutaminyl-tRNA synthetases. The reaction takes place in the presence of glutamine and ATP through an activated phospho-Asp-tRNA(Asn) or phospho-Glu-tRNA(Gln). This is Aspartyl/glutamyl-tRNA(Asn/Gln) amidotransferase subunit B from Mycolicibacterium smegmatis (strain ATCC 700084 / mc(2)155) (Mycobacterium smegmatis).